Consider the following 3085-residue polypeptide: Genome polyprotein (3085 aa).

The 144-residue stretch at 170–313 folds into the Peptidase S30 domain; that stretch reads LVAKSDFDDL…AGDVGRTMHY (144 aa). Active-site for P1 proteinase activity residues include His224, Glu233, and Ser266. The Involved in interaction with stylet and aphid transmission signature appears at 365 to 368; sequence KMAC. Residues 622-624 carry the Involved in virions binding and aphid transmission motif; the sequence is PTK. Residues 648-770 form the Peptidase C6 domain; it reads MYIAKEGYCY…EGEMKWYRVG (123 aa). Residues Cys656 and His729 each act as for helper component proteinase activity in the active site. A Helicase ATP-binding domain is found at 1241-1393; sequence TICASSEQEF…TQHDVLIKIE (153 aa). 1254–1261 is an ATP binding site; sequence GAVGSGKS. Residues 1343–1346 carry the DESH box motif; the sequence is DESH. The 160-residue stretch at 1412 to 1571 folds into the Helicase C-terminal domain; it reads DVVQNGDNIL…NLPVMTHNVT (160 aa). A Nuclear localization signal motif is present at residues 1895-1904; it reads ERGKRKGNNS. Tyr1919 carries the O-(5'-phospho-RNA)-tyrosine modification. Residues 2047–2266 form the Peptidase C4 domain; the sequence is GKSIVKGLRN…VAWNGMTLRE (220 aa). Catalysis depends on for nuclear inclusion protein A activity residues His2092, Asp2127, and Cys2198. Positions 2535–2659 constitute a RdRp catalytic domain; that stretch reads WIYCDADGSQ…AIYPSKEKFL (125 aa). The interval 2801 to 2869 is disordered; it reads DGPDIVTYQG…STAVPRLKQI (69 aa). The span at 2816-2831 shows a compositional bias: low complexity; sequence KSSQPQSSSPQVPQQV. Over residues 2839–2855 the composition is skewed to basic and acidic residues; that stretch reads GRDKQSVIKHDSTKSKD. Thr3068 is modified (phosphothreonine).

The protein belongs to the potyviridae genome polyprotein family. Interacts with host eIF4E protein (via cap-binding region); this interaction mediates the translation of the VPg-viral RNA conjugates. Part of a complex that comprises VPg, RNA, host EIF4E and EIF4G; this interaction mediates the translation of the VPg-viral RNA conjugates. Post-translationally, VPg is uridylylated by the polymerase and is covalently attached to the 5'-end of the genomic RNA. This uridylylated form acts as a nucleotide-peptide primer for the polymerase. Potyviral RNA is expressed as two polyproteins which undergo post-translational proteolytic processing. Genome polyprotein is processed by NIa-pro, P1 and HC-pro proteinases resulting in the production of at least ten individual proteins. P3N-PIPO polyprotein is cleaved by P1 and HC-pro proteinases resulting in the production of three individual proteins. The P1 proteinase and the HC-pro cleave only their respective C-termini autocatalytically. 6K1 is essential for proper proteolytic separation of P3 from CI.

Its subcellular location is the host cytoplasmic vesicle. It localises to the host nucleus. The protein localises to the virion. It carries out the reaction RNA(n) + a ribonucleoside 5'-triphosphate = RNA(n+1) + diphosphate. The enzyme catalyses Hydrolyzes glutaminyl bonds, and activity is further restricted by preferences for the amino acids in P6 - P1' that vary with the species of potyvirus, e.g. Glu-Xaa-Xaa-Tyr-Xaa-Gln-|-(Ser or Gly) for the enzyme from tobacco etch virus. The natural substrate is the viral polyprotein, but other proteins and oligopeptides containing the appropriate consensus sequence are also cleaved.. It catalyses the reaction Hydrolyzes a Gly-|-Gly bond at its own C-terminus, commonly in the sequence -Tyr-Xaa-Val-Gly-|-Gly, in the processing of the potyviral polyprotein.. In terms of biological role, required for aphid transmission and also has proteolytic activity. Only cleaves a Gly-Gly dipeptide at its own C-terminus. Interacts with virions and aphid stylets. Acts as a suppressor of RNA-mediated gene silencing, also known as post-transcriptional gene silencing (PTGS), a mechanism of plant viral defense that limits the accumulation of viral RNAs. May have RNA-binding activity. Its function is as follows. Has helicase activity. It may be involved in replication. Functionally, indispensable for virus replication. Reduces the abundance of host transcripts related to jasmonic acid biosynthesis therefore altering the host defenses. In order to increase its own stability, decreases host protein degradation pathways. Indispensable for virus replication. In terms of biological role, mediates the cap-independent, EIF4E-dependent translation of viral genomic RNAs. Binds to the cap-binding site of host EIF4E and thus interferes with the host EIF4E-dependent mRNA export and translation. VPg-RNA directly binds EIF4E and is a template for transcription. Also forms trimeric complexes with EIF4E-EIF4G, which are templates for translation. Its function is as follows. Has RNA-binding and proteolytic activities. Functionally, an RNA-dependent RNA polymerase that plays an essential role in the virus replication. Involved in aphid transmission, cell-to-cell and systemis movement, encapsidation of the viral RNA and in the regulation of viral RNA amplification. The polypeptide is Genome polyprotein (Beet mosaic virus (BtMV)).